The primary structure comprises 306 residues: Ribose-5-phosphate isomerase (306 aa).

Residues 45–68 (GRAQFGVGSTSTSSGDANSVCPAP) form a disordered region. Over residues 51-61 (VGSTSTSSGDA) the composition is skewed to polar residues. Phosphoserine is present on serine 102.

This sequence belongs to the ribose 5-phosphate isomerase family.

It carries out the reaction aldehydo-D-ribose 5-phosphate = D-ribulose 5-phosphate. It functions in the pathway carbohydrate degradation; pentose phosphate pathway; D-ribose 5-phosphate from D-ribulose 5-phosphate (non-oxidative stage): step 1/1. This is Ribose-5-phosphate isomerase from Sus scrofa (Pig).